Here is a 191-residue protein sequence, read N- to C-terminus: Large ribosomal subunit protein eL6 (191 aa).

The protein belongs to the eukaryotic ribosomal protein eL6 family.

The sequence is that of Large ribosomal subunit protein eL6 (RPL6) from Tetrahymena thermophila (strain SB210).